A 551-amino-acid chain; its full sequence is MASCSRTWLLPGMAPQATAQTVPRPLQSLKVFAGLPHRRRVLFSGVSSRTRRGRIRSVKDDSLHFDPSKIEAPPYSSYFDSTSGQLEPASGARASIPGQEYWPEGTASRVRAARAPAPVGESAGTPSFGKKPGSRRKGYKEQVASATAGRGTETSGDEGESVVAIEASSDETLEETKDSLDEYVVYEMPKEENLSEYEMDKMMGRPHPFVDPQKAMSVGEPKSSEELWWNWRRKSEENEMWSRWQRRRPDVDTVFAKAMAETGQIKIFGDHPTRTEAALAKARRHLFKEERLEAEQRRLEEIGPIAYYSEWVEAYKNKDTSREAVQKHFEETGEDENTQLITMFQHQTAGEFRIMMGTDVRIQRDPLAMRMREDQIKQIWGGDPVYPTINYVHDPDEVADYRGPEFHEPTPEVVPYLMEHGIMITKEELYARLNEEMEDINQDITYLPEVRDPMATAVDIGEHSYNEDSDDDEEDADKVVAQPESLEDDEDDGDDAEDAEGKVSRNWSVLKTTGQAENPKEKSKKDQLSLKEAIADSENLTDFLMDFEEDE.

The transit peptide at 1–47 (MASCSRTWLLPGMAPQATAQTVPRPLQSLKVFAGLPHRRRVLFSGVS) directs the protein to the chloroplast. Disordered regions lie at residues 76–161 (SSYF…EGES) and 463–529 (HSYN…DQLS). Positions 109–119 (RVRAARAPAPV) are enriched in low complexity. 2 stretches are compositionally biased toward acidic residues: residues 467–476 (EDSDDDEEDA) and 485–498 (SLED…DAED). Over residues 505–516 (RNWSVLKTTGQA) the composition is skewed to polar residues. Over residues 518-529 (NPKEKSKKDQLS) the composition is skewed to basic and acidic residues.

Component of the plastid-encoded plastid RNA polymerase (PEP) complex.

The protein resides in the plastid. Its subcellular location is the chloroplast. In terms of biological role, required for the activity of the plastid-encoded RNA polymerase (PEP) and full expression of genes transcribed by PEP. Required for the proper build-up and formation of the PEP-complex. Binds single-stranded (ss) DNA and RNA, but not double-stranded (ds) DNA. The sequence is that of Protein PLASTID TRANSCRIPTIONALLY ACTIVE 12, chloroplastic from Oryza sativa subsp. japonica (Rice).